Here is a 247-residue protein sequence, read N- to C-terminus: ATP synthase subunit a, chloroplastic (247 aa).

5 helical membrane-spanning segments follow: residues 38-58 (QVLITSWVVIAILLGSSIIAV), 95-115 (VPFIGTMFLFIFVSNWSGALL), 134-154 (INTTVALALLTSVAYFYAGLT), 199-219 (LVVVVLVSLVPLVVPIPVMFL), and 220-240 (GLFTSGIQALIFATLAAAYIG).

The protein belongs to the ATPase A chain family. As to quaternary structure, F-type ATPases have 2 components, CF(1) - the catalytic core - and CF(0) - the membrane proton channel. CF(1) has five subunits: alpha(3), beta(3), gamma(1), delta(1), epsilon(1). CF(0) has four main subunits: a, b, b' and c.

The protein resides in the plastid. It localises to the chloroplast thylakoid membrane. Key component of the proton channel; it plays a direct role in the translocation of protons across the membrane. The polypeptide is ATP synthase subunit a, chloroplastic (Morus indica (Mulberry)).